We begin with the raw amino-acid sequence, 789 residues long: uncharacterized protein (789 aa).

5 disordered regions span residues 107–326 (YQQD…NNNN), 426–491 (MLKS…NNNN), 523–625 (SVNF…ISNN), 666–751 (THTF…KGNN), and 765–789 (PTRFNNKNNNNSNGFTSNKRFYNQH). Acidic residues predominate over residues 113–123 (NNTDDEQEQEQ). 4 stretches are compositionally biased toward low complexity: residues 124 to 141 (EQQQKQNEIINKITTPIK), 151 to 194 (TSQT…ITPI), 201 to 213 (SISTSSSKQLRSS), and 225 to 270 (TSST…THNS). A compositionally biased stretch (acidic residues) spans 274-290 (IDDDDGDNNDEINDEND). Composition is skewed to low complexity over residues 291–326 (INSNNLTFSSSTKSKKINNNNNSIDSNNTNINNNNN) and 429–491 (SNNS…NNNN). The segment covering 523 to 549 (SVNFDRNQNQKSPFLNNTSMPNINFNE) has biased composition (polar residues). 4 stretches are compositionally biased toward low complexity: residues 550–581 (QSQQQSQNQYYQQQQQQQQQQSNNSMNQSINY), 602–617 (TSGSSLKYSTSSNNSK), 696–722 (HIMNSMNSNFNHHHNNNNQLFNNSGSN), and 766–789 (TRFNNKNNNNSNGFTSNKRFYNQH).

This is an uncharacterized protein from Dictyostelium discoideum (Social amoeba).